A 137-amino-acid polypeptide reads, in one-letter code: NTF2-related export protein (137 aa).

Residues 19 to 135 enclose the NTF2 domain; that stretch reads ESKKFMDVYY…YKVKSDRFRY (117 aa).

As to quaternary structure, preferentially binds Ran-GTP.

Its subcellular location is the nucleus. Stimulator of protein export for NES-containing proteins. Also plays a role in the nuclear export of U1 snRNA, tRNA, and mRNA. The protein is NTF2-related export protein (nxt-1) of Caenorhabditis elegans.